The sequence spans 344 residues: Lipase chaperone (344 aa).

The chain crosses the membrane as a helical span at residues 14-34 (AAIYGVVGLAAIAGVAMWSGA).

Belongs to the lipase chaperone family.

Its subcellular location is the cell inner membrane. May be involved in the folding of the extracellular lipase during its passage through the periplasm. The protein is Lipase chaperone of Burkholderia cenocepacia (strain HI2424).